The chain runs to 360 residues: Phospho-N-acetylmuramoyl-pentapeptide-transferase (360 aa).

Residues 1–25 (MLVWLAEHLVKYYSGFNVFSYLTFR) lie on the Periplasmic side of the membrane. Residues 26 to 46 (AIVSLLTALFISLWMGPRMIA) traverse the membrane as a helical segment. Residues 47 to 71 (HLQKLSFGQVVRNDGPESHFSKRGT) lie on the Cytoplasmic side of the membrane. The chain crosses the membrane as a helical span at residues 72-92 (PTMGGIMILTAIVISVLLWAY). Residue Pro93 is a topological domain, periplasmic. Residues 94–114 (SNPYVWCVLVVLVGYGVIGFV) traverse the membrane as a helical segment. The Cytoplasmic portion of the chain corresponds to 115–131 (DDYRKVVRKDTKGLIAR). The chain crosses the membrane as a helical span at residues 132–152 (WKYFWMSVIALGVAFALYLVG). Over 153-167 (KDTPATQLVVPFFKD) the chain is Periplasmic. The helical transmembrane segment at 168-188 (VMPQLGLFYILLAYFVIVGTG) threads the bilayer. Residues 189-198 (NAVNLTDGLD) are Cytoplasmic-facing. A helical membrane pass occupies residues 199 to 219 (GLAIMPTVFVAGGFALVAWAT). Over 220-235 (GNMNFASYLHIPYLRH) the chain is Periplasmic. Residues 236–256 (AGELVIVCTAIVGAGLGFLWF) traverse the membrane as a helical segment. Over 257 to 262 (NTYPAQ) the chain is Cytoplasmic. The helical transmembrane segment at 263–283 (VFMGDVGSLALGGALGIIAVL) threads the bilayer. Over 284–287 (LRQE) the chain is Periplasmic. Residues 288–308 (FLLVIMGGVFVVETLSVILQV) traverse the membrane as a helical segment. At 309 to 337 (GSFKLRGQRIFRMAPIHHHYELKGWPEPR) the chain is on the cytoplasmic side. Residues 338–358 (VIVRFWIISLMLVLIGLATLK) form a helical membrane-spanning segment. At 359 to 360 (VR) the chain is on the periplasmic side.

The protein belongs to the glycosyltransferase 4 family. MraY subfamily. It depends on Mg(2+) as a cofactor.

The protein resides in the cell inner membrane. It carries out the reaction UDP-N-acetyl-alpha-D-muramoyl-L-alanyl-gamma-D-glutamyl-meso-2,6-diaminopimeloyl-D-alanyl-D-alanine + di-trans,octa-cis-undecaprenyl phosphate = di-trans,octa-cis-undecaprenyl diphospho-N-acetyl-alpha-D-muramoyl-L-alanyl-D-glutamyl-meso-2,6-diaminopimeloyl-D-alanyl-D-alanine + UMP. It participates in cell wall biogenesis; peptidoglycan biosynthesis. In terms of biological role, catalyzes the initial step of the lipid cycle reactions in the biosynthesis of the cell wall peptidoglycan: transfers peptidoglycan precursor phospho-MurNAc-pentapeptide from UDP-MurNAc-pentapeptide onto the lipid carrier undecaprenyl phosphate, yielding undecaprenyl-pyrophosphoryl-MurNAc-pentapeptide, known as lipid I. The sequence is that of Phospho-N-acetylmuramoyl-pentapeptide-transferase from Escherichia coli O157:H7.